Consider the following 335-residue polypeptide: Protease HtpX homolog (335 aa).

Helical transmembrane passes span 9–29, 42–62, and 64–84; these read VYMM…STIA, LFTS…AIIY, and ILAY…LLII. Histidine 168 provides a ligand contact to Zn(2+). Glutamate 169 is an active-site residue. Residue histidine 172 coordinates Zn(2+). The next 2 helical transmembrane spans lie at 179–199 and 213–233; these read AVML…YALL and AAIG…VLAF. Glutamate 238 contacts Zn(2+).

It belongs to the peptidase M48B family. Requires Zn(2+) as cofactor.

It localises to the cell membrane. The chain is Protease HtpX homolog from Archaeoglobus fulgidus (strain ATCC 49558 / DSM 4304 / JCM 9628 / NBRC 100126 / VC-16).